Here is a 362-residue protein sequence, read N- to C-terminus: UDP-3-O-acylglucosamine N-acyltransferase 1 (362 aa).

The Proton acceptor role is filled by histidine 258.

This sequence belongs to the transferase hexapeptide repeat family. LpxD subfamily. In terms of assembly, homotrimer.

The enzyme catalyses a UDP-3-O-[(3R)-3-hydroxyacyl]-alpha-D-glucosamine + a (3R)-hydroxyacyl-[ACP] = a UDP-2-N,3-O-bis[(3R)-3-hydroxyacyl]-alpha-D-glucosamine + holo-[ACP] + H(+). It participates in bacterial outer membrane biogenesis; LPS lipid A biosynthesis. Functionally, catalyzes the N-acylation of UDP-3-O-acylglucosamine using 3-hydroxyacyl-ACP as the acyl donor. Is involved in the biosynthesis of lipid A, a phosphorylated glycolipid that anchors the lipopolysaccharide to the outer membrane of the cell. The protein is UDP-3-O-acylglucosamine N-acyltransferase 1 of Nitrobacter winogradskyi (strain ATCC 25391 / DSM 10237 / CIP 104748 / NCIMB 11846 / Nb-255).